The sequence spans 505 residues: Maturase K (505 aa).

It belongs to the intron maturase 2 family. MatK subfamily.

It localises to the plastid. The protein resides in the chloroplast. Its function is as follows. Usually encoded in the trnK tRNA gene intron. Probably assists in splicing its own and other chloroplast group II introns. The protein is Maturase K of Portulacaria afra (Elephant's food).